The primary structure comprises 489 residues: Cryptochrome DASH (489 aa).

A Photolyase/cryptochrome alpha/beta domain is found at 6–140 (PTVLVWFRND…EAKGYWGSTL (135 aa)).

This sequence belongs to the DNA photolyase class-1 family. FAD is required as a cofactor. Requires (6R)-5,10-methylene-5,6,7,8-tetrahydrofolate as cofactor.

Functionally, may have a photoreceptor function. Binds DNA; represses transcription of at least 8 genes, including slr0364 and slr1866. Does not encode a DNA photolyase function. Its disruption does not affect circadian rhythm. This chain is Cryptochrome DASH (cry), found in Synechocystis sp. (strain ATCC 27184 / PCC 6803 / Kazusa).